Here is a 425-residue protein sequence, read N- to C-terminus: Serine hydroxymethyltransferase (425 aa).

Residues L128 and 132-134 (GHL) each bind (6S)-5,6,7,8-tetrahydrofolate. An N6-(pyridoxal phosphate)lysine modification is found at K237.

Belongs to the SHMT family. Homodimer. It depends on pyridoxal 5'-phosphate as a cofactor.

The protein localises to the cytoplasm. It carries out the reaction (6R)-5,10-methylene-5,6,7,8-tetrahydrofolate + glycine + H2O = (6S)-5,6,7,8-tetrahydrofolate + L-serine. It participates in one-carbon metabolism; tetrahydrofolate interconversion. Its pathway is amino-acid biosynthesis; glycine biosynthesis; glycine from L-serine: step 1/1. Its function is as follows. Catalyzes the reversible interconversion of serine and glycine with tetrahydrofolate (THF) serving as the one-carbon carrier. This reaction serves as the major source of one-carbon groups required for the biosynthesis of purines, thymidylate, methionine, and other important biomolecules. Also exhibits THF-independent aldolase activity toward beta-hydroxyamino acids, producing glycine and aldehydes, via a retro-aldol mechanism. In Wolbachia pipientis wMel, this protein is Serine hydroxymethyltransferase.